Here is a 676-residue protein sequence, read N- to C-terminus: Solute carrier family 26 member 10 (676 aa).

The tract at residues 1 to 24 is disordered; the sequence is MSGPLASGTCSDPEEVSDLKSPLS. Helical transmembrane passes span 101–121, 124–144, 149–165, 190–210, 226–246, 267–287, 300–320, 353–373, 398–418, 426–446, and 487–507; these read AVAG…FALL, VPPV…SLLG, LSTG…GSVV, VGAA…MFVL, ALTS…LLGL, ALSQ…VLLV, LLTP…LCFT, ILAD…SLAS, ISSL…SLLV, LAGL…RPFF, and IVTW…VGVV. An STAS domain is found at 539-660; it reads ESRKLLQVPG…VSVQDAAAHA (122 aa).

Belongs to the SLC26A/SulP transporter (TC 2.A.53) family.

Its subcellular location is the membrane. Functionally, chloride/bicarbonate exchanger. This is Solute carrier family 26 member 10 (Slc26a10) from Mus musculus (Mouse).